The following is a 312-amino-acid chain: DNA-directed RNA polymerase subunit alpha (312 aa).

The tract at residues 1–226 (MIEFEKPKIT…DHLNLFVDLS (226 aa)) is alpha N-terminal domain (alpha-NTD). The interval 243 to 312 (TERVLDKIIE…ELGLSLKKRK (70 aa)) is alpha C-terminal domain (alpha-CTD).

It belongs to the RNA polymerase alpha chain family. As to quaternary structure, homodimer. The RNAP catalytic core consists of 2 alpha, 1 beta, 1 beta' and 1 omega subunit. When a sigma factor is associated with the core the holoenzyme is formed, which can initiate transcription.

It carries out the reaction RNA(n) + a ribonucleoside 5'-triphosphate = RNA(n+1) + diphosphate. DNA-dependent RNA polymerase catalyzes the transcription of DNA into RNA using the four ribonucleoside triphosphates as substrates. This chain is DNA-directed RNA polymerase subunit alpha, found in Lactococcus lactis subsp. lactis (strain IL1403) (Streptococcus lactis).